The sequence spans 61 residues: MSILKKSLFLVLFLGLVSFSICEEEKREAEEEENEDEIEEQSEEKKRFEPVPPGFTPFRQS.

The N-terminal stretch at 1-22 is a signal peptide; that stretch reads MSILKKSLFLVLFLGLVSFSIC. The propeptide occupies 23–50; that stretch reads EEEKREAEEEENEDEIEEQSEEKKRFEP. Positions 25-61 are disordered; that stretch reads EKREAEEEENEDEIEEQSEEKKRFEPVPPGFTPFRQS. Residues 30–42 are compositionally biased toward acidic residues; that stretch reads EEEENEDEIEEQS. Pro-52 is modified (4-hydroxyproline; in form [Val1,Hyp2,Thr6]-Bradykinyl-Gln,Ser and [Val1,Hyp2,Thr6]-Bradykinin).

Belongs to the frog skin active peptide (FSAP) family. Bradykinin-related peptide subfamily. Expressed by the skin glands.

The protein localises to the secreted. In terms of biological role, induces contraction of rat ileum smooth muscle (EC(50)=2.73 uM) but has no activity towards smooth muscle from tail artery, urinary bladder or uterus up to concentrations of 100 uM. Binds to both bradykinin receptor B1 (BDKRB1) and B2 (BDKRB2); the effect via BDKRB1 is stronger. [Val1,Hyp2,Thr6]-bradykinin-Gln,Ser: Induces contraction of rat ileum smooth muscle (EC(50)=710 nM) but has no activity towards smooth muscle from tail artery, urinary bladder or uterus up to concentrations of 100 uM. Binds to both bradykinin receptor B1 (BDKRB1) and B2 (BDKRB2); the effect via BDKRB1 is stronger. Induces contraction of guinea pig ileum smooth muscle. This is [Val1,Thr6]-bradykinyl-Gln,Ser from Pithecopus hypochondrialis (Orange-legged leaf frog).